The primary structure comprises 2083 residues: Nonribosomal peptide synthetase sidD (2083 aa).

Residues 251–650 form an adenylation 1 region; that stretch reads TYRQIDQYSS…GEIESQLRAR (400 aa). The Carrier 1 domain maps to 764 to 840; sequence RELSDLERRL…AMASVVRICD (77 aa). The residue at position 801 (Ser-801) is an O-(pantetheine 4'-phosphoryl)serine. The interval 876 to 1146 is condensation 1; it reads EDIYPCTPTQ…IATVPIRVRI (271 aa). The segment at 1336-1421 is adenylation 2; sequence LSPIGCVGEL…TEIERHLAEH (86 aa). A Carrier 2 domain is found at 1557–1633; it reads NHLSASESIL…DAARVMKVDE (77 aa). Position 1594 is an O-(pantetheine 4'-phosphoryl)serine (Ser-1594). Positions 1674 to 1946 are condensation 2; sequence DVLPVTDSQD…YQLTPVRVPF (273 aa).

This sequence belongs to the NRP synthetase family.

The protein operates within siderophore biosynthesis. Its function is as follows. Nonribosomal peptide synthetase; part of the siderophore biosynthetic pathway. Aspergillus fumigatus produces four types of siderophores, low-molecular-mass iron chelators, including excreted fusarinine C (FsC) and triacetylfusarinine C (TAFC) for iron uptake; and intacellular ferricrocin (FC) for hyphal and hydroxyferricrocin (HFC) for conidial iron distribution and storage. TAFC consists of three N(2)-acetyl-N(5)-anhydromevalonyl-N(5)-hydroxyornithine residues cyclically linked by ester bonds; FC is a cyclic hexapeptide with the structure Gly-Ser-Gly-(N(5)-acetyl-N(5)-hydroxyornithine)x3. The biosynthesis of all four siderophores depends on the hydroxylation of ornithine, catalyzed by the monooxygenase sidA. Subsequently, the pathways for biosynthesis of extra- and intracellular siderophores split. For biosynthesis of extracellular siderophores, the transacylase sidF transfers anhydromevalonyl to N(5)-hydroxyornithine. The required anhydromevalonyl-CoA moiety is derived from mevalonate by CoA ligation and dehydration catalyzed by sidI and sidH respectively. The acetylation of N(5)-hydroxyornithine for FC biosynthesis involves the constitutively expressed sidL. FC is hydroxylated to HFC by an as yet uncharacterized enzyme during conidiation. Assembly of fusarinine C (FsC) and FC is catalyzed by two different nonribosomal peptide synthetases (NRPS), sidD and sidC respectively. Subsequently, sidG catalyzes N2-acetylation of FsC for forming TAFC. Both extra- and intracellular siderophores are crucial for growth during iron limitation and virulence. The sequence is that of Nonribosomal peptide synthetase sidD from Aspergillus fumigatus (strain ATCC MYA-4609 / CBS 101355 / FGSC A1100 / Af293) (Neosartorya fumigata).